A 132-amino-acid polypeptide reads, in one-letter code: MYSVLQLLKCLCSCWRKGPEGRRFQTEAAVCARPAWSPHPAGASEALGALPPPRQLVEKRRVSPPRRLDQSGRDGGAVAKCSLSRGLSPPGWTGRSLLRPWGSAAVLGSRAALACVLRPSRGVMPATIQSRR.

A disordered region spans residues 39–93; sequence HPAGASEALGALPPPRQLVEKRRVSPPRRLDQSGRDGGAVAKCSLSRGLSPPGWT. A compositionally biased stretch (basic and acidic residues) spans 56–72; the sequence is LVEKRRVSPPRRLDQSG.

This is an uncharacterized protein from Homo sapiens (Human).